A 1004-amino-acid chain; its full sequence is Zinc finger protein 316 (1004 aa).

The interval 1 to 148 (MAALHTTPDS…EEEEDEDEDD (148 aa)) is disordered. At Ala2 the chain carries N-acetylalanine. A Phosphothreonine modification is found at Thr7. Phosphoserine is present on Ser10. Acidic residues predominate over residues 21–60 (GSECDPDQEEEEEEEEKGEEVQEVEEEEEEIVVEEEEEGV). Residues 61 to 72 (AEVVQDAQVEAV) are compositionally biased toward low complexity. Residues 73–95 (AEVEVEADVEEEDVKEVLAEEEC) are compositionally biased toward acidic residues. Residue Ser112 is modified to Phosphoserine. A compositionally biased stretch (acidic residues) spans 132–148 (EDLEEEEEEEEDEDEDD). Residues 158-229 (VTFEDVAVYF…DSPRPEEGDI (72 aa)) enclose the KRAB domain. 5 consecutive C2H2-type zinc fingers follow at residues 345–367 (TTCDVCGKVFPHRSRLAKHQRYH), 373–395 (FGCEECGKGFVYRSHLAIHQRTH), 401–423 (FPCPDCGKRFVYKSHLVTHRRIH), 429–451 (YRCAFCGAGFGRRSYLVTHQRTH), and 457–479 (YPCSHCGRSFSQSSALARHQAVH). The C2H2-type 6; degenerate zinc-finger motif lies at 485–512 (HCCPDCGQAFRLRADFQRHRRGGGCAEA). Residues 508-574 (GCAEAGGDGP…TPSGKVDPAP (67 aa)) form a disordered region. The segment covering 531–557 (EDTDPGPEGSEVGEADGEAEAAAEERE) has biased composition (acidic residues). 5 C2H2-type zinc fingers span residues 691 to 713 (WICSDCGKTFGRRAALAKHQRYH), 719 to 741 (HRCADCGKSFVYGSHLARHRRTH), 747 to 769 (FPCPECGARFARGSHLAAHVRGH), 775 to 797 (FVCGVCGAGFSRRAHLTAHGRAH), and 803 to 825 (YACGECGRRFGQSAALTRHQWAH). Residue Lys829 forms a Glycyl lysine isopeptide (Lys-Gly) (interchain with G-Cter in SUMO2) linkage. 4 C2H2-type zinc fingers span residues 831-853 (HRCPDCGKGFGHSSDFKRHRRTH), 859-881 (FRCADCGRGFAQRSNLAKHRRGH), 887-909 (FPCPECGKRFSQRSVLVTHQRTH), and 915-937 (YACANCGRRFSQSSHLLTHMKTH). The tract at residues 936–976 (THRGATAAPGSGSAPAPAPKPEAAAKGPSSAGPGERGSALL) is disordered. The segment covering 939-968 (GATAAPGSGSAPAPAPKPEAAAKGPSSAGP) has biased composition (low complexity). A Glycyl lysine isopeptide (Lys-Gly) (interchain with G-Cter in SUMO2) cross-link involves residue Lys955.

It belongs to the krueppel C2H2-type zinc-finger protein family.

The protein resides in the nucleus. Functionally, may be involved in transcriptional regulation. This chain is Zinc finger protein 316 (ZNF316), found in Homo sapiens (Human).